The following is a 101-amino-acid chain: Large ribosomal subunit protein eL30 (101 aa).

This sequence belongs to the eukaryotic ribosomal protein eL30 family.

The protein is Large ribosomal subunit protein eL30 of Pyrobaculum neutrophilum (strain DSM 2338 / JCM 9278 / NBRC 100436 / V24Sta) (Thermoproteus neutrophilus).